The chain runs to 378 residues: S-(hydroxymethyl)glutathione dehydrogenase (378 aa).

Zn(2+) contacts are provided by C49, H71, C101, C104, C107, C115, and C178.

It belongs to the zinc-containing alcohol dehydrogenase family. Class-III subfamily. As to quaternary structure, homodimer. It depends on Zn(2+) as a cofactor.

It is found in the cytoplasm. The enzyme catalyses S-(hydroxymethyl)glutathione + NADP(+) = S-formylglutathione + NADPH + H(+). It catalyses the reaction S-(hydroxymethyl)glutathione + NAD(+) = S-formylglutathione + NADH + H(+). It carries out the reaction a primary alcohol + NAD(+) = an aldehyde + NADH + H(+). The catalysed reaction is a secondary alcohol + NAD(+) = a ketone + NADH + H(+). The enzyme catalyses S-nitrosoglutathione + NADH + H(+) = S-(hydroxysulfenamide)glutathione + NAD(+). Its function is as follows. Has high formaldehyde dehydrogenase activity in the presence of glutathione and catalyzes the oxidation of normal alcohols in a reaction that is not GSH-dependent. In addition, hemithiolacetals other than those formed from GSH, including omega-thiol fatty acids, also are substrates. Also acts as a S-nitroso-glutathione reductase by catalyzing the NADH-dependent reduction of S-nitrosoglutathione. The chain is S-(hydroxymethyl)glutathione dehydrogenase (frmA) from Haemophilus influenzae (strain ATCC 51907 / DSM 11121 / KW20 / Rd).